The chain runs to 419 residues: [Butirosin acyl-carrier protein]--L-glutamate ligase (419 aa).

The 202-residue stretch at 144–345 (RRLMERNGFN…FVESRVLVFN (202 aa)) folds into the ATP-grasp domain. Residue 174–231 (ISAGFSKCVLKVPYGSSGKGLKVIDNERNFRFLLNYIQNRQTNVDLLLEGWHPHRLSL) participates in ATP binding. Residues aspartate 298, glutamate 312, and asparagine 314 each contribute to the Mg(2+) site. Aspartate 298, glutamate 312, and asparagine 314 together coordinate Mn(2+).

Monomer. It depends on Mg(2+) as a cofactor. Mn(2+) is required as a cofactor.

The catalysed reaction is holo-[BtrI ACP] + L-glutamate + ATP = gamma-L-glutamyl-[BtrI ACP] + ADP + phosphate. It carries out the reaction 4-aminobutanoyl-[BtrI ACP] + L-glutamate + ATP = 4-(gamma-L-glutamylamino)butanoyl-[BtrI ACP] + ADP + phosphate + H(+). It functions in the pathway antibiotic biosynthesis; butirosin biosynthesis. Functionally, ATP-dependent ligase that catalyzes 2 steps in the biosynthesis of the side chain of the aminoglycoside antibiotics in the biosynthetic pathway of butirosin. Mediates the addition of one molecule of L-glutamate to a dedicated acyl-carrier protein. Following decarboxylation of the product by BtrK, adds a second L-glutamate molecule. This chain is [Butirosin acyl-carrier protein]--L-glutamate ligase (btrJ), found in Niallia circulans (Bacillus circulans).